Consider the following 297-residue polypeptide: Large ribosomal subunit protein uL18 (297 aa).

The residue at position 2 (G2) is an N-acetylglycine. N6-acetyllysine occurs at positions 5 and 48. S185 bears the Phosphoserine mark. K220 is subject to N6-acetyllysine; alternate. K220 is covalently cross-linked (Glycyl lysine isopeptide (Lys-Gly) (interchain with G-Cter in SUMO1); alternate). Residue K220 forms a Glycyl lysine isopeptide (Lys-Gly) (interchain with G-Cter in SUMO2); alternate linkage. T232 carries the phosphothreonine modification. The tract at residues V252–S297 is disordered. The segment covering K258–R268 has biased composition (basic residues). S272 bears the Phosphoserine mark.

The protein belongs to the universal ribosomal protein uL18 family. As to quaternary structure, component of the large ribosomal subunit (LSU). Part of the 5S RNP complex, which is a LSU subcomplex composed of the 5S RNA, RPL5 and RPL11. Component of a hexameric 5S RNP precursor complex, composed of 5S RNA, RRS1, RPF2/BXDC1, RPL5, RPL11 and HEATR3; this complex acts as a precursor for ribosome assembly. Interacts with NVL in an ATP-dependent manner. Interacts with RRP1B. Interacts with IPO5, IPO7 and KPNB1; these interactions may be involved in RPL5 nuclear import for the assembly of ribosomal subunits.

Its subcellular location is the cytoplasm. The protein localises to the nucleus. It localises to the nucleolus. In terms of biological role, component of the ribosome, a large ribonucleoprotein complex responsible for the synthesis of proteins in the cell. The small ribosomal subunit (SSU) binds messenger RNAs (mRNAs) and translates the encoded message by selecting cognate aminoacyl-transfer RNA (tRNA) molecules. The large subunit (LSU) contains the ribosomal catalytic site termed the peptidyl transferase center (PTC), which catalyzes the formation of peptide bonds, thereby polymerizing the amino acids delivered by tRNAs into a polypeptide chain. The nascent polypeptides leave the ribosome through a tunnel in the LSU and interact with protein factors that function in enzymatic processing, targeting, and the membrane insertion of nascent chains at the exit of the ribosomal tunnel. As part of the 5S RNP/5S ribonucleoprotein particle it is an essential component of the LSU, required for its formation and the maturation of rRNAs. It also couples ribosome biogenesis to p53/TP53 activation. As part of the 5S RNP it accumulates in the nucleoplasm and inhibits MDM2, when ribosome biogenesis is perturbed, mediating the stabilization and the activation of TP53. The sequence is that of Large ribosomal subunit protein uL18 (RPL5) from Bos taurus (Bovine).